An 893-amino-acid chain; its full sequence is NEDD4-binding protein 1 (893 aa).

One can recognise a KH-like domain in the interval 59-143 (QEAVHSAKEY…IQQFVKLFES (85 aa)). The disordered stretch occupies residues 213–243 (EYTQSAATGPSSARDEVVVQEDSRNKARTPV). Polar residues predominate over residues 214–223 (YTQSAATGPS). Over residues 225–237 (ARDEVVVQEDSRN) the composition is skewed to basic and acidic residues. T241 carries the post-translational modification Phosphothreonine. A phosphoserine mark is found at S257, S269, and S299. 3 disordered regions span residues 273-339 (DALS…DGKD), 394-433 (RDFP…QSHT), and 472-564 (IWGS…PPLP). 2 stretches are compositionally biased toward polar residues: residues 405-433 (ASQS…QSHT) and 523-537 (GFQQ…NNTK). Over residues 551–564 (QPKPNYPPLSPPLP) the composition is skewed to pro residues. At S560 the chain carries Phosphoserine. Residues 615-767 (LKHIVIDGSN…LGRNGPRLEE (153 aa)) enclose the RNase NYN domain. The interval 793 to 820 (PGFRSPSTQVANNSHQPPPRIQTSSSPW) is disordered. The span at 797 to 820 (SPSTQVANNSHQPPPRIQTSSSPW) shows a compositional bias: polar residues. The interval 846-893 (RSSAETSELREALLKIFPDSEQKLKIDQILAAHPYMKDLNALSALVLD) is coCUN.

Belongs to the N4BP1 family. As to quaternary structure, interacts with NEDD4. Interacts with ITCH (via WW domain 2). Proteolytically cleaved by CASP8 downstream of TLR3 or TLR4, leading to its inactivation. Mainly cleaved at Asp-488 by CASP8. Cleaved by caspase-like protein MALT1, leading to its inactivation. Post-translationally, mono- and polyubiquitinated on the CoCUN region. Monoubiquitinated by NEDD4. Polyubiquitinated, leading to its degradation by the proteasome. Sumoylated with SUMO1, abrogating polyubiquitination and subsequent degradation. Desumoylated by SENP1, leading to accumulation in PML nuclear bodies.

The protein resides in the cytoplasm. Its subcellular location is the cytosol. The protein localises to the nucleus. It localises to the nucleolus. It is found in the PML body. Proteolytic cleavage by CASP8 or MALT1 leads to its inactivation. In terms of biological role, potent suppressor of cytokine production that acts as a regulator of innate immune signaling and inflammation. Acts as a key negative regulator of select cytokine and chemokine responses elicited by TRIF-independent Toll-like receptors (TLRs), thereby limiting inflammatory cytokine responses to minor insults. In response to more threatening pathogens, cleaved by CASP8 downstream of TLR3 or TLR4, leading to its inactivation, thereby allowing production of inflammatory cytokines. Acts as a restriction factor against some viruses: restricts viral replication by binding to mRNA viruses and mediating their degradation via its ribonuclease activity. Also acts as an inhibitor of the E3 ubiquitin-protein ligase ITCH: acts by interacting with the second WW domain of ITCH, leading to compete with ITCH's substrates and impairing ubiquitination of substrates. The sequence is that of NEDD4-binding protein 1 from Mus musculus (Mouse).